Reading from the N-terminus, the 852-residue chain is Homeobox-leucine zipper protein ATHB-14 (852 aa).

The disordered stretch occupies residues 1-25 (MMMVHSMSRDMMNRESPDKGLDSGK). A compositionally biased stretch (basic and acidic residues) spans 7-22 (MSRDMMNRESPDKGLD). Positions 22 to 85 (DSGKYVRYTP…NRRCREKQRK (64 aa)) form a DNA-binding region, homeobox. A coiled-coil region spans residues 80-122 (REKQRKEAARLQTVNRKLNAMNKLLMEENDRLQKQVSNLVYEN). The segment at 80-130 (REKQRKEAARLQTVNRKLNAMNKLLMEENDRLQKQVSNLVYENGHMKHQLH) is ZIP domain. Over residues 130 to 148 (HTASGTTTDNSCESVVVSG) the composition is skewed to polar residues. Residues 130 to 166 (HTASGTTTDNSCESVVVSGQQHQQQNPNPQHQQRDAN) are disordered. The span at 149 to 160 (QQHQQQNPNPQH) shows a compositional bias: low complexity. The START domain occupies 164-392 (DANNPAGLLS…IAQETSGEVQ (229 aa)).

This sequence belongs to the HD-ZIP homeobox family. Class III subfamily. Homodimer. Heterodimer with ZPR3. Interacts with ESR1 and ESR2. Interacts with ZPR3. In terms of tissue distribution, expressed in the center of the meristem and on the adaxial side of the leaves.

It is found in the nucleus. Inhibited by ZPR3. Its function is as follows. Probable transcription factor involved in the determination of adaxial-abaxial polarity in ovule primordium. Specifies adaxial leaf fates. The chain is Homeobox-leucine zipper protein ATHB-14 (ATHB-14) from Arabidopsis thaliana (Mouse-ear cress).